The chain runs to 292 residues: Complex I assembly factor TIMMDC1, mitochondrial (292 aa).

2 helical membrane-spanning segments follow: residues 146 to 168 and 195 to 215; these read WSWRVAAFVTLFNTVNTGLTVYR and GLLSGTIIGVILGFPAGVLIL.

It belongs to the Tim17/Tim22/Tim23 family. As to quaternary structure, associates with the intermediate 315 kDa subcomplex of incompletely assembled complex I.

It localises to the mitochondrion membrane. Chaperone protein involved in the assembly of the mitochondrial NADH:ubiquinone oxidoreductase complex (complex I). Participates in constructing the membrane arm of complex I. The chain is Complex I assembly factor TIMMDC1, mitochondrial (timmdc1) from Danio rerio (Zebrafish).